The sequence spans 340 residues: Thioesterase pkgB (340 aa).

Positions 97, 99, 101, 102, and 205 each coordinate Zn(2+). The active-site Proton donor/acceptor is the Asp101. A compositionally biased stretch (low complexity) spans 242-258 (SSRNGGSTSSIGSVSES). Residues 242-271 (SSRNGGSTSSIGSVSESGDSDEEDNNMKTS) form a disordered region.

This sequence belongs to the metallo-beta-lactamase superfamily. The cofactor is Zn(2+).

It catalyses the reaction 3,5,7,9,11,13-hexaoxotetradecanoyl-[ACP] = dehydrocitreoisocoumarin + holo-[ACP] + H2O. The enzyme catalyses 3,5,7,9,11-pentaoxododecanoyl-[ACP] = 6,8-dihydroxy-3-(2-oxopropyl)-isocoumarin + holo-[ACP] + H2O. Thioesterase; part of the pkg gene cluster that mediates the biosynthesis of dihydrocitreoisocoumarin and 6,8-dihydroxy-3-(2-oxopropyl)-isocoumarin. The non-reducing polyketide synthase pkgA performs the condensation of one acetyl-CoA starter unit with 6 and 5 malonyl-CoA units, respectively. As pkgA lacks a releasing domain, the thioesterase pkgB is necessary to break the thioester bond and release dihydrocitreoisocoumarin and 6,8-dihydroxy-3-(2-oxopropyl)-isocoumarin from pkgA. This is Thioesterase pkgB from Emericella nidulans (strain FGSC A4 / ATCC 38163 / CBS 112.46 / NRRL 194 / M139) (Aspergillus nidulans).